Here is a 471-residue protein sequence, read N- to C-terminus: UDP-N-acetylmuramoylalanine--D-glutamate ligase (471 aa).

122–128 (GTNGKTT) contacts ATP.

It belongs to the MurCDEF family.

The protein localises to the cytoplasm. The enzyme catalyses UDP-N-acetyl-alpha-D-muramoyl-L-alanine + D-glutamate + ATP = UDP-N-acetyl-alpha-D-muramoyl-L-alanyl-D-glutamate + ADP + phosphate + H(+). It functions in the pathway cell wall biogenesis; peptidoglycan biosynthesis. Functionally, cell wall formation. Catalyzes the addition of glutamate to the nucleotide precursor UDP-N-acetylmuramoyl-L-alanine (UMA). This chain is UDP-N-acetylmuramoylalanine--D-glutamate ligase, found in Streptomyces coelicolor (strain ATCC BAA-471 / A3(2) / M145).